Here is a 114-residue protein sequence, read N- to C-terminus: Nucleoid-associated protein NT01CX_0824 (114 aa).

This sequence belongs to the YbaB/EbfC family. Homodimer.

The protein localises to the cytoplasm. Its subcellular location is the nucleoid. Functionally, binds to DNA and alters its conformation. May be involved in regulation of gene expression, nucleoid organization and DNA protection. The protein is Nucleoid-associated protein NT01CX_0824 of Clostridium novyi (strain NT).